The chain runs to 379 residues: uncharacterized protein (379 aa).

Residues 7–27 (VYIFAGIFLFIALIILIKIFF) traverse the membrane as a helical segment.

Its subcellular location is the membrane. This is an uncharacterized protein from Caenorhabditis elegans.